The chain runs to 410 residues: BTB/POZ and MATH domain-containing protein 5 (410 aa).

The disordered stretch occupies residues Met-1–Thr-24. The 135-residue stretch at Asn-28–Val-162 folds into the MATH domain. Positions Ser-198 to Val-264 constitute a BTB domain.

Belongs to the Tdpoz family. In terms of assembly, heterodimer with BPM1 and BPM3. Interacts with RAP2-4. Binds to MYB56 at the promoter of FLOWERING LOCUS T (FT). As to expression, ubiquitous.

Its subcellular location is the nucleus. It localises to the cytoplasm. Its pathway is protein modification; protein ubiquitination. May act as a substrate-specific adapter of an E3 ubiquitin-protein ligase complex (CUL3-RBX1-BTB) which mediates the ubiquitination and subsequent proteasomal degradation of target proteins. This Arabidopsis thaliana (Mouse-ear cress) protein is BTB/POZ and MATH domain-containing protein 5 (BPM5).